The sequence spans 374 residues: uncharacterized protein (374 aa).

This sequence belongs to the mimivirus R640 family.

Its subcellular location is the virion. This is an uncharacterized protein from Acanthamoeba polyphaga (Amoeba).